The primary structure comprises 338 residues: Ketol-acid reductoisomerase (NADP(+)) (338 aa).

Residues 1-181 form the KARI N-terminal Rossmann domain; that stretch reads MKVFYDKDCD…GGGRTGIIET (181 aa). NADP(+) contacts are provided by residues 24–27, R47, S50, T52, and 82–85; these read YGSQ and DEFQ. The active site involves H107. G133 contacts NADP(+). One can recognise a KARI C-terminal knotted domain in the interval 182 to 327; it reads TFKDETETDL…EQLRSMMPWI (146 aa). Positions 190, 194, 226, and 230 each coordinate Mg(2+). S251 is a substrate binding site.

Belongs to the ketol-acid reductoisomerase family. The cofactor is Mg(2+).

It catalyses the reaction (2R)-2,3-dihydroxy-3-methylbutanoate + NADP(+) = (2S)-2-acetolactate + NADPH + H(+). It carries out the reaction (2R,3R)-2,3-dihydroxy-3-methylpentanoate + NADP(+) = (S)-2-ethyl-2-hydroxy-3-oxobutanoate + NADPH + H(+). The protein operates within amino-acid biosynthesis; L-isoleucine biosynthesis; L-isoleucine from 2-oxobutanoate: step 2/4. Its pathway is amino-acid biosynthesis; L-valine biosynthesis; L-valine from pyruvate: step 2/4. In terms of biological role, involved in the biosynthesis of branched-chain amino acids (BCAA). Catalyzes an alkyl-migration followed by a ketol-acid reduction of (S)-2-acetolactate (S2AL) to yield (R)-2,3-dihydroxy-isovalerate. In the isomerase reaction, S2AL is rearranged via a Mg-dependent methyl migration to produce 3-hydroxy-3-methyl-2-ketobutyrate (HMKB). In the reductase reaction, this 2-ketoacid undergoes a metal-dependent reduction by NADPH to yield (R)-2,3-dihydroxy-isovalerate. The protein is Ketol-acid reductoisomerase (NADP(+)) of Pseudomonas putida (strain ATCC 700007 / DSM 6899 / JCM 31910 / BCRC 17059 / LMG 24140 / F1).